The following is a 79-amino-acid chain: UPF0180 protein BCAH187_A1552 (79 aa).

This sequence belongs to the UPF0180 family.

The polypeptide is UPF0180 protein BCAH187_A1552 (Bacillus cereus (strain AH187)).